Consider the following 61-residue polypeptide: Small ribosomal subunit protein uS14 (61 aa).

C24, C27, C40, and C43 together coordinate Zn(2+).

This sequence belongs to the universal ribosomal protein uS14 family. Zinc-binding uS14 subfamily. In terms of assembly, part of the 30S ribosomal subunit. Contacts proteins S3 and S10. Requires Zn(2+) as cofactor.

Binds 16S rRNA, required for the assembly of 30S particles and may also be responsible for determining the conformation of the 16S rRNA at the A site. The sequence is that of Small ribosomal subunit protein uS14 from Sulfurovum sp. (strain NBC37-1).